A 37-amino-acid polypeptide reads, in one-letter code: QNETNKKCQGGSCASVCRRVIGVAAGKCINGRCVCYP.

Position 1 is a pyrrolidone carboxylic acid (Gln-1). 3 disulfides stabilise this stretch: Cys-8-Cys-28, Cys-13-Cys-33, and Cys-17-Cys-35.

It belongs to the short scorpion toxin superfamily. Potassium channel inhibitor family. Alpha-KTx 15 subfamily. In terms of tissue distribution, expressed by the venom gland.

Its subcellular location is the secreted. Its function is as follows. Blocker of voltage-gated potassium channels (600 nM of the toxin induces a block of 25% of hERG currents). May also inhibit Kv4/KCND when coexpressed with DPP6 or DPP10. In adult rat brain, it blocks the transient potassium channels in cerebellum granular cells. Blocks potassium channels by a simple 'plugging mechanism', in which a single toxin molecule finds a specific receptor site in the external vestibule of the potassium channel and thereby occludes the outer entry to the potassium conducting pore. In Androctonus australis (Sahara scorpion), this protein is Potassium channel toxin alpha-KTx 15.1.